A 360-amino-acid chain; its full sequence is Polyamine aminopropyltransferase 2 (360 aa).

Residues 68 to 299 (DIWDEISLKE…TDWGFHIAAN (232 aa)) form the PABS domain. An S-methyl-5'-thioadenosine-binding site is contributed by Gln94. His123 and Asp147 together coordinate spermidine. Residues Asp167 and 201–202 (DA) each bind S-methyl-5'-thioadenosine. Asp219 (proton acceptor) is an active-site residue.

It belongs to the spermidine/spermine synthase family. In terms of assembly, homodimer or homotetramer.

It is found in the cytoplasm. The catalysed reaction is S-adenosyl 3-(methylsulfanyl)propylamine + putrescine = S-methyl-5'-thioadenosine + spermidine + H(+). It participates in amine and polyamine biosynthesis; spermidine biosynthesis; spermidine from putrescine: step 1/1. Catalyzes the irreversible transfer of a propylamine group from the amino donor S-adenosylmethioninamine (decarboxy-AdoMet) to putrescine (1,4-diaminobutane) to yield spermidine. The sequence is that of Polyamine aminopropyltransferase 2 from Bacillus anthracis.